A 448-amino-acid chain; its full sequence is UPF0210 protein PAE3581 (448 aa).

Belongs to the UPF0210 family.

The polypeptide is UPF0210 protein PAE3581 (Pyrobaculum aerophilum (strain ATCC 51768 / DSM 7523 / JCM 9630 / CIP 104966 / NBRC 100827 / IM2)).